A 208-amino-acid polypeptide reads, in one-letter code: Ribosomal RNA small subunit methyltransferase G (208 aa).

S-adenosyl-L-methionine is bound by residues Gly73, Leu78, 124–125 (VE), and Arg139.

This sequence belongs to the methyltransferase superfamily. RNA methyltransferase RsmG family.

Its subcellular location is the cytoplasm. The enzyme catalyses guanosine(527) in 16S rRNA + S-adenosyl-L-methionine = N(7)-methylguanosine(527) in 16S rRNA + S-adenosyl-L-homocysteine. Specifically methylates the N7 position of guanine in position 527 of 16S rRNA. The chain is Ribosomal RNA small subunit methyltransferase G from Aeromonas salmonicida (strain A449).